Consider the following 115-residue polypeptide: U3-lycotoxin-Ls1e (115 aa).

An N-terminal signal peptide occupies residues Met-1–Ala-20. Positions Glu-21–Arg-44 are excised as a propeptide. Disulfide bonds link Cys-48–Cys-63, Cys-55–Cys-72, Cys-62–Cys-87, and Cys-74–Cys-85.

It belongs to the neurotoxin 19 (CSTX) family. 01 subfamily. As to expression, expressed by the venom gland.

It localises to the secreted. This is U3-lycotoxin-Ls1e from Lycosa singoriensis (Wolf spider).